Consider the following 343-residue polypeptide: Glycogen biosynthesis protein GlgD (343 aa).

The protein belongs to the bacterial/plant glucose-1-phosphate adenylyltransferase family.

Functionally, required for the synthesis of glycogen. In Bacillus subtilis (strain 168), this protein is Glycogen biosynthesis protein GlgD (glgD).